Reading from the N-terminus, the 119-residue chain is NADH-quinone oxidoreductase subunit A (119 aa).

Helical transmembrane passes span 7–27, 63–83, and 88–108; these read FPVL…MFLG, LIAI…PWGV, and IGWF…VGFV.

It belongs to the complex I subunit 3 family. As to quaternary structure, NDH-1 is composed of 14 different subunits. Subunits NuoA, H, J, K, L, M, N constitute the membrane sector of the complex.

It is found in the cell membrane. It catalyses the reaction a quinone + NADH + 5 H(+)(in) = a quinol + NAD(+) + 4 H(+)(out). Its function is as follows. NDH-1 shuttles electrons from NADH, via FMN and iron-sulfur (Fe-S) centers, to quinones in the respiratory chain. The immediate electron acceptor for the enzyme in this species is believed to be ubiquinone. Couples the redox reaction to proton translocation (for every two electrons transferred, four hydrogen ions are translocated across the cytoplasmic membrane), and thus conserves the redox energy in a proton gradient. In Polynucleobacter asymbioticus (strain DSM 18221 / CIP 109841 / QLW-P1DMWA-1) (Polynucleobacter necessarius subsp. asymbioticus), this protein is NADH-quinone oxidoreductase subunit A.